The sequence spans 391 residues: S-adenosylmethionine synthase (391 aa).

H14 contributes to the ATP binding site. D16 provides a ligand contact to Mg(2+). E42 is a K(+) binding site. L-methionine contacts are provided by E55 and Q98. A flexible loop region spans residues 98 to 108 (QSPDIAMGVDE). Residues 172 to 174 (DGK), 238 to 239 (RF), D247, 253 to 254 (RK), A270, and K274 each bind ATP. D247 lines the L-methionine pocket. L-methionine is bound at residue K278.

The protein belongs to the AdoMet synthase family. Homotetramer; dimer of dimers. The cofactor is Mg(2+). K(+) is required as a cofactor.

Its subcellular location is the cytoplasm. The enzyme catalyses L-methionine + ATP + H2O = S-adenosyl-L-methionine + phosphate + diphosphate. It functions in the pathway amino-acid biosynthesis; S-adenosyl-L-methionine biosynthesis; S-adenosyl-L-methionine from L-methionine: step 1/1. Functionally, catalyzes the formation of S-adenosylmethionine (AdoMet) from methionine and ATP. The overall synthetic reaction is composed of two sequential steps, AdoMet formation and the subsequent tripolyphosphate hydrolysis which occurs prior to release of AdoMet from the enzyme. The sequence is that of S-adenosylmethionine synthase from Clostridium tetani (strain Massachusetts / E88).